The primary structure comprises 333 residues: MNLYRRYGWELTLAALLVLEILLFGLSNSRMLDINVLLFSTSDFICIGIVALPLTMVIVSGGIDISFGSTIGLCAIFLGIVFQAGVPMSVAIPLTVLVGALCGLINAGLILYTGVNPLVITLGTLYLFGGSALLLSGLSGATGYEGIGGFPAAFTDFANQTLFGLPIPLVIFMLCVLLFWLLMHRTHSGRHVFLIGQSSRVARYSALPIARTLCMLYAMTGVASAIAAILLVSYFGSARSDLGASFLMPAITAVVLGGANIYGGSGSILGTALAVLLVGYLQQGLQMIGTPNQISSALSGALLILVVVGRSISLHRHLIYEWLQRRRSRKASA.

A run of 10 helical transmembrane segments spans residues Tyr-7–Ser-27, Ile-45–Ile-65, Phe-67–Pro-87, Val-90–Ile-110, Leu-118–Leu-138, Leu-162–Leu-182, Thr-212–Val-232, Ser-240–Asn-260, Ile-261–Leu-281, and Ile-288–Val-308.

This sequence belongs to the binding-protein-dependent transport system permease family. AraH/RbsC subfamily. The complex is composed of two ATP-binding proteins (LsrA), two transmembrane proteins (LsrC and LsrD) and a solute-binding protein (LsrB).

It localises to the cell inner membrane. Its function is as follows. Part of the ABC transporter complex LsrABCD involved in autoinducer 2 (AI-2) import. Probably responsible for the translocation of the substrate across the membrane. This chain is Autoinducer 2 import system permease protein LsrD (lsrD), found in Yersinia pseudotuberculosis serotype I (strain IP32953).